Reading from the N-terminus, the 464-residue chain is Multifunctional dye peroxidase DyP2 (464 aa).

D203 serves as the catalytic Proton acceptor. Mn(2+)-binding residues include E258, E273, and E284. H321 provides a ligand contact to heme.

Belongs to the DyP-type peroxidase family. In terms of assembly, exists both as a monomeric and oligomeric species in solution; the monomeric form contains no bound heme cofactor and is inactive. The cofactor is heme b. Mn(2+) is required as a cofactor.

The protein localises to the secreted. It catalyses the reaction 1-(4-hydroxy-3-methoxyphenyl)-2-(2-methoxyphenoxy)propane-1,3-diol + H2O2 = guaiacol + vanillin + glycolaldehyde + H2O. The enzyme catalyses 2 Mn(2+) + H2O2 + 2 H(+) = 2 Mn(3+) + 2 H2O. It carries out the reaction 2 a phenolic donor + H2O2 = 2 a phenolic radical donor + 2 H2O. The catalysed reaction is Reactive Blue 5 + 2 H2O2 = 2,2'-disulfonyl azobenzene + 3-[(4-amino-6-chloro-1,3,5-triazin-2-yl)amino]benzenesulfonate + phthalate + 2 H2O + 2 H(+). Functionally, displays both high peroxidase and manganese peroxidase activity. Is likely involved in lignin degradation. Also has a Mn-dependent oxidase mode of action that expands its substrate scope in vitro; is thus able to catalyze the O(2)- and Mn-dependent oxidative decarboxylation of 4-methoxymandelate to anisaldehyde. The sequence is that of Multifunctional dye peroxidase DyP2 from Amycolatopsis sp. (strain ATCC 39116 / 75iv2).